The following is a 415-amino-acid chain: Putative FNIP repeat-containing protein L415 (415 aa).

The stretch at 148-185 is one FNIP repeat; sequence FIKKGAIPDSVTHLYFGSDYLSKDIIPKNVVYLRFGDF.

The protein is Putative FNIP repeat-containing protein L415 of Acanthamoeba polyphaga mimivirus (APMV).